The chain runs to 970 residues: Protein CLASP-3 (970 aa).

Disordered regions lie at residues 314–377 (SRLA…QKAR) and 651–675 (NGIS…ETPH). The segment covering 344–355 (GSRTRTSSITSN) has biased composition (polar residues). An HEAT repeat occupies 905-943 (ITPCVIKAYQSTSSSVRKTVVYCLVAMVNRVGEQRMAPH).

This sequence belongs to the CLASP family.

It is found in the cytoplasm. Its subcellular location is the cytoskeleton. Microtubule plus-end tracking protein that promotes the stabilization of dynamic microtubules. The protein is Protein CLASP-3 (cls-3) of Caenorhabditis briggsae.